We begin with the raw amino-acid sequence, 79 residues long: uncharacterized protein (79 aa).

Positions 1–18 are cleaved as a signal peptide; sequence MQIKNIVAVLATVTAINA. Residues 24 to 44 are disordered; that stretch reads PNATTPNATQPNATQPNTTLP. N-linked (GlcNAc...) asparagine glycosylation is found at Asn25, Asn30, Asn35, and Asn40. Gly55 carries the GPI-anchor amidated glycine lipid modification. Positions 56 to 79 are cleaved as a propeptide — removed in mature form; the sequence is EAVVNTMAAGAFGAAIAAGVAFLF.

The protein resides in the cell membrane. This is an uncharacterized protein from Saccharomyces cerevisiae (strain ATCC 204508 / S288c) (Baker's yeast).